We begin with the raw amino-acid sequence, 214 residues long: tRNA (guanine-N(7)-)-methyltransferase (214 aa).

Positions 44, 69, 96, and 118 each coordinate S-adenosyl-L-methionine. The active site involves Asp118. Substrate-binding positions include Lys122, Asp154, and 191–194 (TEYE).

This sequence belongs to the class I-like SAM-binding methyltransferase superfamily. TrmB family.

The enzyme catalyses guanosine(46) in tRNA + S-adenosyl-L-methionine = N(7)-methylguanosine(46) in tRNA + S-adenosyl-L-homocysteine. It participates in tRNA modification; N(7)-methylguanine-tRNA biosynthesis. Its function is as follows. Catalyzes the formation of N(7)-methylguanine at position 46 (m7G46) in tRNA. This is tRNA (guanine-N(7)-)-methyltransferase from Listeria monocytogenes serovar 1/2a (strain ATCC BAA-679 / EGD-e).